The chain runs to 150 residues: Triosephosphate isomerase (150 aa).

Substrate contacts are provided by N9 and K11. The Electrophile role is filled by H95.

This sequence belongs to the triosephosphate isomerase family. As to quaternary structure, homodimer.

It is found in the cytoplasm. The enzyme catalyses D-glyceraldehyde 3-phosphate = dihydroxyacetone phosphate. The protein operates within carbohydrate biosynthesis; gluconeogenesis. It functions in the pathway carbohydrate degradation; glycolysis; D-glyceraldehyde 3-phosphate from glycerone phosphate: step 1/1. This chain is Triosephosphate isomerase (tpiA), found in Mycoplasmoides pirum (Mycoplasma pirum).